The primary structure comprises 146 residues: Oleosin (146 aa).

An N-acetylalanine modification is found at alanine 2. 3 helical membrane passes run 22 to 42 (ILGFITLFVSGAILLLLTGLT), 56 to 76 (VLIFFSPILIPVATVLFVAVA), and 77 to 97 (GFLSAGGFGLAALSAISWLYN). A Proline-knot motif is present at residues 55 to 66 (PVLIFFSPILIP).

It belongs to the oleosin family. Expressed in pollen (at protein level).

The protein resides in the lipid droplet. The protein localises to the membrane. The chain is Oleosin from Pinus elliottii (Slash pine).